The chain runs to 734 residues: Cullin-4 (734 aa).

Residues 666-728 (DRQFELQASI…KEYLEREDND (63 aa)) form the Cullin neddylation domain. A Glycyl lysine isopeptide (Lys-Gly) (interchain with G-Cter in NEDD8) cross-link involves residue Lys680.

The protein belongs to the cullin family. Component of the Clr4 methyltransferase complex (ClrC) composed of at least clr4, rik1, pcu4, rbx1, raf1 and raf2. The cullin pcu4, rik1, raf1, raf2 and the ring-box protein rbx1 are components of an E3 ubiquitin ligase, whose activity is essential for heterochromatin assembly. Post-translationally, neddylated; enhancing the ubiquitin-ligase activity.

The protein resides in the cytoplasm. Its subcellular location is the nucleus. It is found in the chromosome. Its pathway is protein modification; protein ubiquitination. In terms of biological role, required, indirectly, for activation of ribonucleotide reductase through the degradation of the protein spd1, thereby supplying deoxyribonucleotides for DNA replication and repair. Also has a role as a scaffold for assembling ubiquitin ligases. Component of the Clr4 methyltransferase complex (ClrC) which contributes to the establishment of heterochromatin by specifically methylating histone H3 to form H3K9me. ClrC preferentially ubiquitylates H3K14 and ClrC-mediated H3 ubiquitination promotes clr4 methyltransferase activity for the methylation of H3K9. H3K9me represents a specific tag for epigenetic transcriptional repression by recruiting swi6/HP1 to methylated histones which leads to transcriptional silencing within centromeric heterochromatin, telomeric regions and at the silent mating-type loci. The protein is Cullin-4 (pcu4) of Schizosaccharomyces pombe (strain 972 / ATCC 24843) (Fission yeast).